A 159-amino-acid polypeptide reads, in one-letter code: uncharacterized protein (159 aa).

The next 3 helical transmembrane spans lie at 17–37 (FFFF…NLSS), 44–64 (WLIV…PLPI), and 67–87 (FSGA…DLIA).

The protein resides in the membrane. This is an uncharacterized protein from Saccharomyces cerevisiae (strain ATCC 204508 / S288c) (Baker's yeast).